The primary structure comprises 441 residues: MGGLRLLAVALTCSCWWPQGGQGKTLRGSFSSAAARDAQGQSIGHFEFHGDHALLCVRINNVAVAVGKEAKLYLFQAQEWLKLLESSPGYSCSERLARAQLTVTVTQTEHNLTVSQLPAPQTWRVFYADKFTCRDDSESPQGEEIPFEMVLLNPDAEGNPLDHFSARESGLHEFFFLLVLVYFVTACIYAQSLWQAMKKGGPMHTILKVLTTALLLQAASALANYIHLSRYSRDGLGVPLIGSLAEVFDIASQIQMLYLLLSLCMGWTIVRMKKSQSRPLQWDSTPASTGIAVFIVITQSILLLWEQFEDTSHHSAHSHRSLAGLLLIVLRICLALSLGCGLYQVITVERSALKREFYITFAKGCILWFLCQPALACIAVAFNDYQRDKLITVGVILCQAVAMVILYRLFLSHSLYWEVSSLSSVTLPLTISSAHRGRPHF.

An N-terminal signal peptide occupies residues 1–23 (MGGLRLLAVALTCSCWWPQGGQG). N-linked (GlcNAc...) asparagine glycosylation occurs at N111. The next 7 membrane-spanning stretches (helical) occupy residues 174-194 (FFFL…QSLW), 206-226 (ILKV…ANYI), 250-270 (IASQ…WTIV), 285-305 (TPAS…LLLW), 322-342 (LAGL…GCGL), 361-381 (FAKG…IAVA), and 390-410 (LITV…YRLF).

The protein resides in the membrane. This Mus musculus (Mouse) protein is Integral membrane protein GPR180 (Gpr180).